A 380-amino-acid polypeptide reads, in one-letter code: NADPH oxidoreductase (380 aa).

Residues 58–164 enclose the FAD-binding FR-type domain; sequence ARELRGRILG…AAPQGNFVLP (107 aa). The 82-residue stretch at 299–380 folds into the 2Fe-2S ferredoxin-type domain; the sequence is GTVTFARSGK…AASGDCVLDI (82 aa). [2Fe-2S] cluster-binding residues include cysteine 333, cysteine 338, cysteine 341, and cysteine 368.

In terms of assembly, interacts with DesA3 to form a functional acyl-CoA desaturase complex. [2Fe-2S] cluster serves as cofactor. Requires FAD as cofactor.

It is found in the cell membrane. Its pathway is lipid metabolism; fatty acid metabolism. Is likely involved in the aerobic desaturation system responsible for the synthesis of oleic acid from stearoyl-CoA; oleic acid is a precursor of mycobacterial membrane phospholipids and triglycerides. Is the electron transfer partner for the stearoyl-CoA 9-desaturase DesA3. Catalyzes electron transfer reaction between NADPH and the diiron center of DesA3. Cannot use NADH. The polypeptide is NADPH oxidoreductase (Mycobacterium tuberculosis (strain ATCC 25618 / H37Rv)).